The sequence spans 171 residues: Protein ups1 homolog (171 aa).

Residues methionine 1 to glutamate 79 form a required for mitochondrial targeting region. One can recognise a PRELI/MSF1 domain in the interval threonine 2–serine 171.

Its subcellular location is the mitochondrion inner membrane. It localises to the mitochondrion intermembrane space. Functionally, required for maintenance of normal mitochondrial morphology as well as PCP1-dependent processing of MGM1. The polypeptide is Protein ups1 homolog (Schizosaccharomyces pombe (strain 972 / ATCC 24843) (Fission yeast)).